A 559-amino-acid chain; its full sequence is Probable inorganic carbon transporter subunit DabB1 (559 aa).

13 helical membrane-spanning segments follow: residues 4-24 (LQWL…LFAA), 33-53 (LSVA…VAYI), 76-96 (LSSI…VYSI), 106-126 (PRFF…VAAG), 173-193 (LVLA…PTLF), 202-222 (ATIM…LSAF), 240-260 (GPTP…GFII), 273-293 (VLHM…VLML), 310-330 (MGFM…FHLI), 375-395 (LPWL…LVIA), 408-428 (GAIV…FATH), 440-460 (MMIL…GHAF), and 487-507 (GLVF…YLAS).

This sequence belongs to the inorganic carbon transporter (TC 9.A.2) DabB family. As to quaternary structure, forms a complex with DabA1.

It is found in the cell inner membrane. Part of an energy-coupled inorganic carbon pump. In Halothiobacillus neapolitanus (strain ATCC 23641 / c2) (Thiobacillus neapolitanus), this protein is Probable inorganic carbon transporter subunit DabB1.